Reading from the N-terminus, the 345-residue chain is uncharacterized protein (345 aa).

The region spanning 1 to 198 (MDVLSAVLLA…LSEGLLDHEE (198 aa)) is the CNNM transmembrane domain. A run of 2 helical transmembrane segments spans residues 3-23 (VLSA…FVGA) and 95-115 (VPPA…HVLL). CBS domains lie at 217 to 280 (AVPL…PQTV) and 285 to 342 (VVRP…MRDG). The chain crosses the membrane as a helical span at residues 312 to 332 (LALVTADNGSVVGMVALEDVV).

This sequence belongs to the TerC family.

Its subcellular location is the cell membrane. This is an uncharacterized protein from Mycobacterium tuberculosis (strain CDC 1551 / Oshkosh).